The chain runs to 120 residues: UPF0231 protein YacL (120 aa).

This sequence belongs to the UPF0231 family.

This is UPF0231 protein YacL from Escherichia coli O139:H28 (strain E24377A / ETEC).